Consider the following 662-residue polypeptide: NADH-ubiquinone oxidoreductase chain 5 (662 aa).

16 consecutive transmembrane segments (helical) span residues 40–62 (AALSIVAFYEVGLSGSPVSIVIG), 77–99 (LFDSLTVSMLLPVLIVSSLVHLY), 112–129 (RFFSYLSMFTFFMLVLVA), 133–155 (YFIMFVGWEGIGISSYLLINFWY), 168–190 (LTVNRVGDMFLSVGFFAIFWVFG), 200–222 (VAPYINETAITIIGLLLLVGAMA), 243–262 (VSALIHAATLVTAGVYLMLR), 272–294 (TVLVVITWVGALTAFFAATTGLL), 301–320 (VIAYSTCSQMGYLFMAVGLS), 325–347 (ALFHLVNHAFFKALLFLAAGAVI), 360–382 (GGLVNFLPFTYTAILIGSLSLMA), 408–430 (TIAYWLGTISAVFTAFYSFRLVS), 450–472 (APMIIVIPLVILSIMSIVFGYIA), 510–529 (LLPAIGSLFGAGLALYLYHV), 609–631 (GVITSYALYIMLGLVSLIFLVFA), and 636–658 (VFNEYGLSLILVYLSALVLLPSS).

This sequence belongs to the complex I subunit 5 family.

It is found in the mitochondrion inner membrane. It carries out the reaction a ubiquinone + NADH + 5 H(+)(in) = a ubiquinol + NAD(+) + 4 H(+)(out). Its function is as follows. Core subunit of the mitochondrial membrane respiratory chain NADH dehydrogenase (Complex I) that is believed to belong to the minimal assembly required for catalysis. Complex I functions in the transfer of electrons from NADH to the respiratory chain. The immediate electron acceptor for the enzyme is believed to be ubiquinone. The polypeptide is NADH-ubiquinone oxidoreductase chain 5 (ND5) (Cryptococcus neoformans var. grubii serotype A (strain H99 / ATCC 208821 / CBS 10515 / FGSC 9487) (Filobasidiella neoformans var. grubii)).